The chain runs to 66 residues: uncharacterized protein (66 aa).

Residues 5-59 (LKYYRALHNLTQEDLAKKLGVSRQTIIAIEKGKYDPSLKLAFKIAKFFGVKIEDI) form the HTH cro/C1-type domain. The H-T-H motif DNA-binding region spans 16–35 (QEDLAKKLGVSRQTIIAIEK).

This is an uncharacterized protein from Methanocaldococcus jannaschii (strain ATCC 43067 / DSM 2661 / JAL-1 / JCM 10045 / NBRC 100440) (Methanococcus jannaschii).